A 255-amino-acid chain; its full sequence is Uridylate kinase (255 aa).

22 to 25 is a binding site for ATP; it reads KLSG. Residues 30 to 35 are involved in allosteric activation by GTP; that stretch reads GNGGYG. UMP is bound at residue Gly-64. ATP is bound by residues Gly-65 and Arg-69. UMP-binding positions include Asp-85 and 146–153; that span reads TGNPFFTT. ATP-binding residues include Asn-174, Tyr-180, and Asp-183.

The protein belongs to the UMP kinase family. As to quaternary structure, homohexamer.

It localises to the cytoplasm. The enzyme catalyses UMP + ATP = UDP + ADP. It participates in pyrimidine metabolism; CTP biosynthesis via de novo pathway; UDP from UMP (UMPK route): step 1/1. Its activity is regulated as follows. Allosterically activated by GTP. Inhibited by UTP. Its function is as follows. Catalyzes the reversible phosphorylation of UMP to UDP. This is Uridylate kinase from Rubrobacter xylanophilus (strain DSM 9941 / JCM 11954 / NBRC 16129 / PRD-1).